Consider the following 266-residue polypeptide: uncharacterized protein (266 aa).

Residues 112–261 (LEKKIFISHS…KKWERIKAKF (150 aa)) enclose the TIR domain. Glu192 is an active-site residue.

The catalysed reaction is NAD(+) + H2O = ADP-D-ribose + nicotinamide + H(+). This is an uncharacterized protein from Bacillus subtilis (strain 168).